The chain runs to 636 residues: Threonine--tRNA ligase (636 aa).

Residues methionine 1 to threonine 61 enclose the TGS domain. A catalytic region spans residues aspartate 238–proline 528. Positions 329, 380, and 505 each coordinate Zn(2+).

It belongs to the class-II aminoacyl-tRNA synthetase family. In terms of assembly, homodimer. Requires Zn(2+) as cofactor.

It localises to the cytoplasm. The catalysed reaction is tRNA(Thr) + L-threonine + ATP = L-threonyl-tRNA(Thr) + AMP + diphosphate + H(+). Catalyzes the attachment of threonine to tRNA(Thr) in a two-step reaction: L-threonine is first activated by ATP to form Thr-AMP and then transferred to the acceptor end of tRNA(Thr). Also edits incorrectly charged L-seryl-tRNA(Thr). In Desulfatibacillum aliphaticivorans, this protein is Threonine--tRNA ligase.